The chain runs to 291 residues: Phosphate import ATP-binding protein PstB (291 aa).

The region spanning 44–286 (VKAREVNVFY…PEEKRTQDYI (243 aa)) is the ABC transporter domain. An ATP-binding site is contributed by 76–83 (GPSGCGKS).

This sequence belongs to the ABC transporter superfamily. Phosphate importer (TC 3.A.1.7) family. The complex is composed of two ATP-binding proteins (PstB), two transmembrane proteins (PstC and PstA) and a solute-binding protein (PstS).

The protein resides in the cell inner membrane. The catalysed reaction is phosphate(out) + ATP + H2O = ADP + 2 phosphate(in) + H(+). Part of the ABC transporter complex PstSACB involved in phosphate import. Responsible for energy coupling to the transport system. The protein is Phosphate import ATP-binding protein PstB of Chelativorans sp. (strain BNC1).